Here is a 1018-residue protein sequence, read N- to C-terminus: 2-oxoglutarate dehydrogenase-like, mitochondrial (1018 aa).

Ca(2+)-binding residues include His138, Asp151, and Asp153. Thiamine diphosphate is bound by residues Arg307, Asp406, Asn439, Ile441, and Gln671. Residues Asp406, Asn439, and Ile441 each contribute to the Mg(2+) site.

The protein belongs to the alpha-ketoglutarate dehydrogenase family. As to quaternary structure, the OGDHC complex comprises multiple copies of three catalytic enzyme components, the 2-oxoglutarate dehydrogenase (OGDH/E1), the dihydrolipoamide dehydrogenase (DLST/E2) and the dihydrolipoamide dehydrogenase (DLD/E3). OGDHL/E1-like isoenzyme may replace OGDH in the OGDHC complex in the brain. Thiamine diphosphate serves as cofactor. It depends on Mg(2+) as a cofactor.

The protein resides in the mitochondrion matrix. It carries out the reaction N(6)-[(R)-lipoyl]-L-lysyl-[protein] + 2-oxoglutarate + H(+) = N(6)-[(R)-S(8)-succinyldihydrolipoyl]-L-lysyl-[protein] + CO2. 2-oxoglutarate dehydrogenase (E1-like) component of the 2-oxoglutarate dehydrogenase multienzyme complex (OGDHC) which mediates the decarboxylation of alpha-ketoglutarate in the tricarboxylic acid cycle. The OGDHC complex catalyzes the overall conversion of 2-oxoglutarate to succinyl-CoA and CO(2) while reducing NAD(+) to NADH. The OGDHC complex is mainly active in the mitochondrion. Involved in the inhibition of cell proliferation and in apoptosis. The sequence is that of 2-oxoglutarate dehydrogenase-like, mitochondrial (ogdhl) from Xenopus laevis (African clawed frog).